A 350-amino-acid chain; its full sequence is Ion-translocating oxidoreductase complex subunit D (350 aa).

4 helical membrane passes run 20–40 (VMLW…LFFG), 42–62 (GNLI…AAFL), 89–109 (LPQF…IVVA), and 120–140 (PFNP…VAMT). FMN phosphoryl threonine is present on Thr178. Transmembrane regions (helical) follow at residues 204-224 (LIAR…VLLI), 228-248 (IITW…SLAF), 255-275 (YAPL…FFIA), 282-302 (ATSH…VYLI), and 306-326 (GNYP…VPFI).

This sequence belongs to the NqrB/RnfD family. As to quaternary structure, the complex is composed of six subunits: RnfA, RnfB, RnfC, RnfD, RnfE and RnfG. It depends on FMN as a cofactor.

Its subcellular location is the cell inner membrane. Functionally, part of a membrane-bound complex that couples electron transfer with translocation of ions across the membrane. This Marinobacter nauticus (strain ATCC 700491 / DSM 11845 / VT8) (Marinobacter aquaeolei) protein is Ion-translocating oxidoreductase complex subunit D.